The sequence spans 706 residues: Axin-related protein (706 aa).

The region spanning 72-191 (SLNLLLDDQD…LQSDICKEYA (120 aa)) is the RGS domain. Disordered regions lie at residues 278-298 (MTDG…REIH), 400-482 (TPAN…GTSA), and 585-605 (STTL…GFST). The segment covering 402–412 (ANLSPRSQSPF) has biased composition (polar residues). The segment covering 453–462 (RSSVSSQLPR) has biased composition (low complexity). Residues 624 to 706 (GQGLAIVYYF…KIICKVERAC (83 aa)) enclose the DIX domain.

In terms of assembly, interacts with dvl2/dsh via DIX domains in both proteins. Forms a complex with ctnnb1/beta-catenin and gsk3b. Also forms heterodimers with mouse Axin1.

Its subcellular location is the cytoplasm. It localises to the cytoplasmic vesicle. Functionally, regulates the wnt signaling pathway by interacting with dvl2/dsh, which displaces gsk3b from the axnr-gsk3b complex and thus prevents degradation of ctnnb1/beta-catenin. The chain is Axin-related protein from Xenopus laevis (African clawed frog).